Reading from the N-terminus, the 251-residue chain is uncharacterized protein (251 aa).

The N-terminal stretch at 1–18 (MRILIILSIILCSLFARA) is a signal peptide.

It belongs to the MlaA family.

This is an uncharacterized protein from Rickettsia felis (strain ATCC VR-1525 / URRWXCal2) (Rickettsia azadi).